The chain runs to 106 residues: UPF0091 protein RC0354 (106 aa).

This sequence belongs to the UPF0091 family.

This is UPF0091 protein RC0354 from Rickettsia conorii (strain ATCC VR-613 / Malish 7).